A 422-amino-acid chain; its full sequence is CRISPR-associated endodeoxyribonuclease Cas12f1 (422 aa).

Residues 1 to 126 (MIKVYRYEIV…PSYKRDIPLD (126 aa)) form a recognition domain (REC) region. The wedge domain (WED) stretch occupies residues 127-211 (LIKENISVNR…YLNISYDFEP (85 aa)). Positions 212-220 (QTRVLDLNK) are linker. The ruvC-I stretch occupies residues 221 to 370 (IMGIDLGVAV…IKIDPQYTSQ (150 aa)). Residues aspartate 225 and glutamate 324 contribute to the active site. A target nucleic acid-binding (TNB) region spans residues 371-399 (RCSECGNIDSGNRIGQAIFKCRACGYEAN). Residues cysteine 372, cysteine 375, cysteine 391, and cysteine 394 each coordinate Zn(2+). The tract at residues 400 to 420 (ADYNAARNIAIPNIDKIIAES) is ruvC-II. Aspartate 401 is a catalytic residue.

The protein belongs to the CRISPR-associated endonuclease Cas12f family. An asymmetric homodimer. Guide RNA is probably required for dimerization. Mg(2+) is required as a cofactor. Zn(2+) serves as cofactor.

Its function is as follows. CRISPR (clustered regularly interspaced short palindromic repeat), is an adaptive immune system that provides protection against mobile genetic elements (viruses, transposable elements and conjugative plasmids). CRISPR clusters contain sequences complementary to antecedent mobile elements and target invading nucleic acids. CRISPR clusters are transcribed and processed into CRISPR RNA (crRNA), which requires a trans-encoded small RNA (tracrRNA), but not this protein. Recognizes a short motif in the CRISPR repeat sequences (the 5' PAM or protospacer adjacent motif, YTT in this organism) to help distinguish self versus nonself, as targets within the CRISPR locus do not have PAMs. Has dsDNA endonuclease activity upon expression in E.coli of this protein, a mini CRISPR array and the probable tracrRNA. Plasmid cleavage is centered around positions 19-24 base pairs 3' of PAM. The mini system protects E.coli against transformation by foreign plasmids. The polypeptide is CRISPR-associated endodeoxyribonuclease Cas12f1 (Sulfoacidibacillus thermotolerans (Acidibacillus sulfuroxidans)).